The following is a 445-amino-acid chain: C-type lectin domain family 4 member M (445 aa).

Over 1–49 the chain is Cytoplasmic; it reads MSDSKEPRVQQLGLLEEDPTTSGIRLFPRDFQFQQIHGHKSSTGCLGHG. The Endocytosis signal signature appears at 14–15; sequence LL. The chain crosses the membrane as a helical; Signal-anchor for type II membrane protein span at residues 50–70; the sequence is PLVLQLLSFTLLAGVLVAILV. At 71 to 445 the chain is on the extracellular side; sequence QVSKVPSSLS…KKPAVCFRDE (375 aa). A glycan (N-linked (GlcNAc...) asparagine) is linked at N92. Tandem repeats lie at residues 108-130, 131-151, 154-176, 177-199, 200-222, 223-245, 246-268, 269-291, and 292-314. Residues 108–315 form a 9 X approximate tandem repeats region; it reads KLQEIYQELT…AFERLCRHCP (208 aa). Intrachain disulfides connect C311–C441, C314–C325, C342–C435, and C414–C427. The region spanning 320 to 436 is the C-type lectin domain; the sequence is FFQGNCYFMS…CDIDNYWICK (117 aa). Residues E405, N407, S409, E412, N423, and D424 each coordinate Ca(2+). N407 is a glycosylation site (N-linked (GlcNAc...) asparagine).

As to quaternary structure, homotetramer.

It is found in the membrane. In terms of biological role, probable pathogen-recognition receptor involved in peripheral immune surveillance in liver. May mediate the endocytosis of pathogens which are subsequently degraded in lysosomal compartments. Probably recognizes in a calcium-dependent manner high mannose N-linked oligosaccharides in a variety of pathogen antigens. Is a receptor for ICAM3, probably by binding to mannose-like carbohydrates. The sequence is that of C-type lectin domain family 4 member M (CLEC4M) from Pan troglodytes (Chimpanzee).